We begin with the raw amino-acid sequence, 75 residues long: RNA-binding protein Hfq (75 aa).

The 61-residue stretch at 9–69 (DQFLNQLRKE…ISTFAPERNI (61 aa)) folds into the Sm domain.

The protein belongs to the Hfq family. Homohexamer.

Functionally, RNA chaperone that binds small regulatory RNA (sRNAs) and mRNAs to facilitate mRNA translational regulation in response to envelope stress, environmental stress and changes in metabolite concentrations. Also binds with high specificity to tRNAs. The sequence is that of RNA-binding protein Hfq from Geobacillus kaustophilus (strain HTA426).